A 249-amino-acid chain; its full sequence is 1-(5-phosphoribosyl)-5-[(5-phosphoribosylamino)methylideneamino] imidazole-4-carboxamide isomerase (249 aa).

Catalysis depends on Asp11, which acts as the Proton acceptor. The Proton donor role is filled by Asp133.

The protein belongs to the HisA/HisF family.

It localises to the cytoplasm. The enzyme catalyses 1-(5-phospho-beta-D-ribosyl)-5-[(5-phospho-beta-D-ribosylamino)methylideneamino]imidazole-4-carboxamide = 5-[(5-phospho-1-deoxy-D-ribulos-1-ylimino)methylamino]-1-(5-phospho-beta-D-ribosyl)imidazole-4-carboxamide. It functions in the pathway amino-acid biosynthesis; L-histidine biosynthesis; L-histidine from 5-phospho-alpha-D-ribose 1-diphosphate: step 4/9. This is 1-(5-phosphoribosyl)-5-[(5-phosphoribosylamino)methylideneamino] imidazole-4-carboxamide isomerase from Haemophilus influenzae (strain 86-028NP).